A 552-amino-acid chain; its full sequence is Membrane protein insertase YidC (552 aa).

Residues isoleucine 3–tryptophan 23 form a helical membrane-spanning segment. The segment at serine 36–aspartate 59 is disordered. A compositionally biased stretch (low complexity) spans threonine 42–aspartate 59. Helical transmembrane passes span tryptophan 364–alanine 384, phenylalanine 430–leucine 450, and methionine 504–leucine 524.

It belongs to the OXA1/ALB3/YidC family. Type 1 subfamily. Interacts with the Sec translocase complex via SecD. Specifically interacts with transmembrane segments of nascent integral membrane proteins during membrane integration.

The protein localises to the cell inner membrane. Required for the insertion and/or proper folding and/or complex formation of integral membrane proteins into the membrane. Involved in integration of membrane proteins that insert both dependently and independently of the Sec translocase complex, as well as at least some lipoproteins. Aids folding of multispanning membrane proteins. The sequence is that of Membrane protein insertase YidC from Paraburkholderia xenovorans (strain LB400).